We begin with the raw amino-acid sequence, 549 residues long: Mitochondrial hydroperoxide bicyclase CYP50918A1 (549 aa).

Residues 1–75 form a disordered region; it reads MPDAFDVSDD…PQGNRKPAVL (75 aa). Basic and acidic residues predominate over residues 8-26; the sequence is SDDKQLVDQQLTRDSDSKP. The segment covering 27-41 has biased composition (low complexity); sequence AAKPASKQKPPSKVP. Residue cysteine 491 coordinates heme. The disordered stretch occupies residues 528 to 549; that stretch reads DTGDHGPPNGKFSVIKPRQPKH.

The protein belongs to the cytochrome P450 family. The cofactor is heme.

Its subcellular location is the mitochondrion. The enzyme catalyses (13S)-hydroperoxy-(9Z,11E,15Z)-octadecatrienoate = plasmodiophorol A. It catalyses the reaction (13S)-hydroperoxy-(9Z,11E,15Z)-octadecatrienoate = plasmodiophorol B. It participates in lipid metabolism; oxylipin biosynthesis. Cytochrome P450 hydroperoxide bicyclase involved in the metabolism of oxylipins natural products such as egregiachlorides, hybridalactone, ecklonialactones and related bicyclic oxylipins. Isomerizes the hydroperoxides into epoxyalcohols via epoxyallylic radical. Can use alpha-linolenic 13-hydroperoxide ((9Z,11E,13S,15Z)-13-hydroperoxy-9,11,15-octadecatrienoic, 13-HPOT) as preferred substrate to produce the heterobicyclic oxylipins plasmodiophorol A (6-oxabicyclo[3.1.0]hexane) and plasmodiophorol B (2-oxabicyclo[2.2.1]heptane) at the ratio 12:1 and a minor product plasmodiophorol C (cyclopentanediol) formed through the hydrolysis of plasmodiophorols A and B and, to a lower extent, active with linoleic acid 13-hydroperoxide ((9Z,11E,13S)-13-hydroperoxy-9,11-octadecadienoic, 13-HPOD), linoleic acid 9-hydroperoxide ((9S,10E,12Z)-9-hydroperoxy-10,12-octadecadienoic, 9-HPOD) and alpha-linolenic 9-hydroperoxide ((9S,10E,12Z,15Z)-9-hydroperoxy-10,12,15-octadecatrienoic, 9-HPOT). In Plasmodiophora brassicae (Clubroot disease agent), this protein is Mitochondrial hydroperoxide bicyclase CYP50918A1.